A 250-amino-acid chain; its full sequence is Transmembrane ascorbate-dependent reductase CYB561 (250 aa).

Position 1 is an N-acetylmethionine (Met-1). Over 1-15 (MEHSSASVPAALPYY) the chain is Cytoplasmic. A helical membrane pass occupies residues 16–36 (VAFSQLLGLTVVAVTGAWLGL). The 202-residue stretch at 18-219 (FSQLLGLTVV…FGVVVLYILA (202 aa)) folds into the Cytochrome b561 domain. Residues 37–50 (YRGGIAWESSLQFN) are Vesicular-facing. Residues 51-71 (VHPLCMVIGMIFLQGDALLVY) form a helical membrane-spanning segment. The heme b site is built by His-52, Arg-72, and Lys-79. Residues 72–83 (RVFRREAKRTTK) lie on the Cytoplasmic side of the membrane. Residues Lys-79 and Lys-83 each contribute to the L-ascorbate site. Residues 84–104 (ILHGLLHVFAFIIALVGLVAV) traverse the membrane as a helical segment. Residues His-86, 115–118 (DLYS), and His-120 contribute to the heme b site. The Vesicular portion of the chain corresponds to 105 to 123 (FDYHKKKGYADLYSLHSWC). Residues 124–144 (GILVFVLYFVQWLVGFSFFLF) form a helical membrane-spanning segment. The Cytoplasmic segment spans residues 145–157 (PGASFSLRSRYRP). Position 152 (Arg-152) interacts with L-ascorbate. A helical transmembrane segment spans residues 158 to 178 (QHIFFGATIFLFSVGTALLGL). The heme b site is built by His-159 and Glu-180. The Vesicular segment spans residues 179-197 (KEALLFKLGSKYSTFEPEG). Residues 198–218 (VLANVLGLLLVCFGVVVLYIL) form a helical membrane-spanning segment. The Cytoplasmic segment spans residues 219 to 250 (AQADWKRPSQAEEQALSMDFKTLTEGDSPSPQ). Lys-224 serves as a coordination point for heme b. Phosphoserine occurs at positions 246 and 248.

It depends on heme b as a cofactor. Abundantly distributed in a number of neuroendocrine tissues.

The protein resides in the cytoplasmic vesicle. Its subcellular location is the secretory vesicle. It is found in the chromaffin granule membrane. It carries out the reaction monodehydro-L-ascorbate radical(out) + L-ascorbate(in) = monodehydro-L-ascorbate radical(in) + L-ascorbate(out). Its function is as follows. Transmembrane reductase that uses ascorbate as an electron donor in the cytoplasm and transfers electrons across membranes to reduce monodehydro-L-ascorbate radical in the lumen of secretory vesicles. It is therefore involved the regeneration and homeostasis within secretory vesicles of ascorbate which in turn provides reducing equivalents needed to support the activity of intravesicular enzymes. In Mus musculus (Mouse), this protein is Transmembrane ascorbate-dependent reductase CYB561.